The chain runs to 232 residues: Multiple organellar RNA editing factor 6, mitochondrial (232 aa).

A mitochondrion-targeting transit peptide spans 1–67; the sequence is MAKTLSRSTA…TIRTRMDRSG (67 aa). Residues 208 to 232 are disordered; that stretch reads TNQRGSDKPKYHDRIRNVRRRENMR. A compositionally biased stretch (basic and acidic residues) spans 212 to 232; sequence GSDKPKYHDRIRNVRRRENMR.

This sequence belongs to the MORF family. As to quaternary structure, heterodimers with MORF8/RIP1, MORF3/RIP3, MORF6/RIP6, MORF7/RIP7 and MORF9/RIP9.

It is found in the mitochondrion. Its function is as follows. Involved in organellar RNA editing. Required for the processing of few RNA editing sites in mitochondria. The protein is Multiple organellar RNA editing factor 6, mitochondrial of Arabidopsis thaliana (Mouse-ear cress).